Reading from the N-terminus, the 155-residue chain is MTEEATTTLSSADIIEIMKLLPHRYPFLMVDKIIEIDGDNTAIGIKNVTVNEPHFTGHFPESPIMPGVLLIEGMAQTAGAICAKKDGQPGNLVYFMTIENARFRKPVVPGDRVEFHVRKHKQRGNIWKFHCDAKVDGALVAEADIGAMIVRKDQA.

His-58 is a catalytic residue.

The protein belongs to the thioester dehydratase family. FabZ subfamily.

It localises to the cytoplasm. The enzyme catalyses a (3R)-hydroxyacyl-[ACP] = a (2E)-enoyl-[ACP] + H2O. Involved in unsaturated fatty acids biosynthesis. Catalyzes the dehydration of short chain beta-hydroxyacyl-ACPs and long chain saturated and unsaturated beta-hydroxyacyl-ACPs. This chain is 3-hydroxyacyl-[acyl-carrier-protein] dehydratase FabZ, found in Rhizobium johnstonii (strain DSM 114642 / LMG 32736 / 3841) (Rhizobium leguminosarum bv. viciae).